A 545-amino-acid polypeptide reads, in one-letter code: CTP synthase (545 aa).

Positions 1 to 266 (MATNYIFVTG…DSFVCDRFRL (266 aa)) are amidoligase domain. Serine 14 contacts CTP. Serine 14 provides a ligand contact to UTP. ATP is bound by residues 15–20 (SLGKGI) and aspartate 72. Mg(2+) is bound by residues aspartate 72 and glutamate 140. Residues 147–149 (DIE), 187–192 (KTKPTQ), and lysine 223 each bind CTP. Residues 187 to 192 (KTKPTQ) and lysine 223 contribute to the UTP site. An ATP-binding site is contributed by 239 to 241 (KDV). A Glutamine amidotransferase type-1 domain is found at 291–542 (TIGMVGKYVE…VAAAKAYQDS (252 aa)). An L-glutamine-binding site is contributed by glycine 352. Residue cysteine 379 is the Nucleophile; for glutamine hydrolysis of the active site. L-glutamine contacts are provided by residues 380 to 383 (LGMQ), glutamate 403, and arginine 470. Active-site residues include histidine 515 and glutamate 517.

Belongs to the CTP synthase family. As to quaternary structure, homotetramer.

The catalysed reaction is UTP + L-glutamine + ATP + H2O = CTP + L-glutamate + ADP + phosphate + 2 H(+). The enzyme catalyses L-glutamine + H2O = L-glutamate + NH4(+). It catalyses the reaction UTP + NH4(+) + ATP = CTP + ADP + phosphate + 2 H(+). It functions in the pathway pyrimidine metabolism; CTP biosynthesis via de novo pathway; CTP from UDP: step 2/2. Allosterically activated by GTP, when glutamine is the substrate; GTP has no effect on the reaction when ammonia is the substrate. The allosteric effector GTP functions by stabilizing the protein conformation that binds the tetrahedral intermediate(s) formed during glutamine hydrolysis. Inhibited by the product CTP, via allosteric rather than competitive inhibition. In terms of biological role, catalyzes the ATP-dependent amination of UTP to CTP with either L-glutamine or ammonia as the source of nitrogen. Regulates intracellular CTP levels through interactions with the four ribonucleotide triphosphates. The chain is CTP synthase from Haemophilus ducreyi (strain 35000HP / ATCC 700724).